A 64-amino-acid polypeptide reads, in one-letter code: Large ribosomal subunit protein bL35 (64 aa).

The span at 1 to 14 (MKQKTHKGAAKRIK) shows a compositional bias: basic residues. Positions 1-50 (MKQKTHKGAAKRIKISGSGKLRREQANRRHLLEGKPSKRTRRLKGTEDVA) are disordered. Basic and acidic residues predominate over residues 21–36 (LRREQANRRHLLEGKP).

Belongs to the bacterial ribosomal protein bL35 family.

The polypeptide is Large ribosomal subunit protein bL35 (Corynebacterium jeikeium (strain K411)).